The primary structure comprises 47 residues: uncharacterized protein (47 aa).

The first 25 residues, 1–25 (MAHKCASAKLLSGIMALLFNGKSLL), serve as a signal peptide directing secretion.

This is an uncharacterized protein from Saccharomyces cerevisiae (strain ATCC 204508 / S288c) (Baker's yeast).